We begin with the raw amino-acid sequence, 601 residues long: MEGTDLLLAGVLFLFAAVVAVPLAARLGIGAVLGYLLAGIAIGPWGLGFISDVDEILHFSELGVVFLMFIIGLELNPAKLWQLRRSIFGVGAAQVLFSAVILGGLLMLTQFKWQAAVIGGIGLAMSSTAMALQLMRDKGMNRNESGQLGFSVLLFQDLAVIPALALVPLLAGSGDDHFDWMKVGMKVLAFVGMLIGGRYLLRPVFRFIAASGVREVFTAATLLLVLGSALFMDALGLSMALGTFIAGILLAESEYRHELEIAIDPFKGLLLGLFFISVGMALNLGVLYTHLLWVVVSVAVLVAVKTGVLYTLARIYGLRSSERMQFAGVLSQGGEFAFVLFSTAASQRLFQDDQMALLLVTVTLSMMTTPLLMKLIDKLLSRRFNQPDDEDEAPWVEDDKPQVIVVGFGRFGQVIGRLLMANKMRITVLERDISAVNLMRKYGYKVYYGDATQLELLRSAGAEAAESIIITCNEPEDTMKLVELCQQHFPHLHILARARGRVEAHELLQAGVTNFSRETFSSALELGRKALVSLGMHPHQAQRAQMHFRRLDMRMLRELMPVHSDTAQISRVREARRELEEIFQREMQQERRQFDGWDEFE.

The next 13 membrane-spanning stretches (helical) occupy residues 5-25 (DLLLAGVLFLFAAVVAVPLAA), 29-49 (IGAVLGYLLAGIAIGPWGLGF), 55-75 (EILHFSELGVVFLMFIIGLEL), 87-107 (IFGVGAAQVLFSAVILGGLLM), 115-135 (AAVIGGIGLAMSSTAMALQLM), 152-172 (VLLFQDLAVIPALALVPLLAG), 177-197 (HFDWMKVGMKVLAFVGMLIGG), 207-227 (FIAASGVREVFTAATLLLVLG), 230-250 (LFMDALGLSMALGTFIAGILL), 261-281 (IAIDPFKGLLLGLFFISVGMA), 284-304 (LGVLYTHLLWVVVSVAVLVAV), 326-346 (FAGVLSQGGEFAFVLFSTAAS), and 356-376 (ALLLVTVTLSMMTTPLLMKLI). One can recognise an RCK N-terminal domain in the interval 400-518 (KPQVIVVGFG…QAGVTNFSRE (119 aa)).

This sequence belongs to the monovalent cation:proton antiporter 2 (CPA2) transporter (TC 2.A.37) family. KefB subfamily. As to quaternary structure, interacts with the regulatory subunit KefG.

The protein localises to the cell inner membrane. In terms of biological role, pore-forming subunit of a potassium efflux system that confers protection against electrophiles. Catalyzes K(+)/H(+) antiport. This is Glutathione-regulated potassium-efflux system protein KefB from Enterobacter sp. (strain 638).